The following is an 87-amino-acid chain: U3-theraphotoxin-Hhn1a 17 (87 aa).

The signal sequence occupies residues 1-24 (MVNVKASMFLTFAGLVLLFVVCYA). A propeptide spanning residues 25–52 (SESEEKEFPKEMLSSIFAVDNDFKQEER) is cleaved from the precursor. 3 disulfides stabilise this stretch: Cys-54-Cys-67, Cys-61-Cys-72, and Cys-66-Cys-79.

This sequence belongs to the neurotoxin 10 (Hwtx-1) family. 51 (Hntx-8) subfamily. Hntx-8 sub-subfamily. As to expression, expressed by the venom gland.

The protein localises to the secreted. Its function is as follows. Ion channel inhibitor. The protein is U3-theraphotoxin-Hhn1a 17 of Cyriopagopus hainanus (Chinese bird spider).